The chain runs to 148 residues: Large ribosomal subunit protein bL9 (148 aa).

This sequence belongs to the bacterial ribosomal protein bL9 family.

Binds to the 23S rRNA. The polypeptide is Large ribosomal subunit protein bL9 (Pseudomonas fluorescens (strain ATCC BAA-477 / NRRL B-23932 / Pf-5)).